The following is a 314-amino-acid chain: MEFKHYSVLRDETIENLNIRPDGIYVDGTLGGAGHSYEIAKRLSDKGRLIGIDQDADAIKAAGERLAEFGDRVTIVRSNYSDMKNVLHSLGIEKVDGIMLDLGVSSFQLDTPKRGFTYRSEDAPLDMRMDDRNALTARDIVNTYSENDLYRIIRDYGEDKFAKNIAKHIVAARQKQEITTTGELNEIIKAAIPQKVRATGGHPSKRTYQAIRIELNHELDVLRDNLDDMIDLLNPGGRICIITFHSLEDRIVKSNFKKNENPCTCPPSFPVCVCGNKSKGTVITRKPILPSEKELEENSRSKSAKLRVFEKNDL.

S-adenosyl-L-methionine-binding positions include 33–35 (AGH), Asp53, Tyr80, Asp101, and Gln108. Residues 293–314 (KELEENSRSKSAKLRVFEKNDL) form a disordered region.

The protein belongs to the methyltransferase superfamily. RsmH family.

It is found in the cytoplasm. The catalysed reaction is cytidine(1402) in 16S rRNA + S-adenosyl-L-methionine = N(4)-methylcytidine(1402) in 16S rRNA + S-adenosyl-L-homocysteine + H(+). Functionally, specifically methylates the N4 position of cytidine in position 1402 (C1402) of 16S rRNA. The sequence is that of Ribosomal RNA small subunit methyltransferase H 2 from Agathobacter rectalis (strain ATCC 33656 / DSM 3377 / JCM 17463 / KCTC 5835 / VPI 0990) (Eubacterium rectale).